Here is a 437-residue protein sequence, read N- to C-terminus: Branched-chain amino acid transport system 3 carrier protein (437 aa).

Transmembrane regions (helical) follow at residues 9-29 (ILALGFMTFALFVGAGNIIFP), 40-60 (VWLAALGFLITAVGLPVITVI), 79-99 (YAGGLLAAVCYLAVGPLFAIP), 120-140 (ALFVYSLAYFLLALAISLYPG), 155-175 (ILALAILGVAAFLWPAGPIGT), 189-209 (FVNGYLTMDTLAALVFGIVIV), 226-246 (YAIVAGLIAGVGLVLVYVSLF), 277-297 (LGSSFLAGLIALACLVTAVGL), 316-336 (LVIILAGFSFIVSNLGLTKLI), 342-362 (VLTAIYPPCIVLVALSFCIGL), 369-389 (ILAPVMLVSLAFGVLDALKAA), and 399-419 (LLHLPLAEQGLAWLIPSVATL).

Belongs to the branched chain amino acid transporter family.

It localises to the cell inner membrane. Its function is as follows. Component of the LIV-III transport system for branched-chain amino acids. BraZ is specific for isoleucine and valine. The LIV-III transport system may be H(+)-coupled. The sequence is that of Branched-chain amino acid transport system 3 carrier protein (braZ) from Pseudomonas aeruginosa (strain ATCC 15692 / DSM 22644 / CIP 104116 / JCM 14847 / LMG 12228 / 1C / PRS 101 / PAO1).